The chain runs to 140 residues: Large ribosomal subunit protein bL34m (140 aa).

The protein belongs to the bacterial ribosomal protein bL34 family. As to quaternary structure, component of the mitochondrial large ribosomal subunit (mt-LSU). Mature N.crassa 74S mitochondrial ribosomes consist of a small (37S) and a large (54S) subunit. The 37S small subunit contains a 16S ribosomal RNA (16S mt-rRNA) and 32 different proteins. The 54S large subunit contains a 23S rRNA (23S mt-rRNA) and 42 different proteins.

Its subcellular location is the mitochondrion. Its function is as follows. Component of the mitochondrial ribosome (mitoribosome), a dedicated translation machinery responsible for the synthesis of mitochondrial genome-encoded proteins, including at least some of the essential transmembrane subunits of the mitochondrial respiratory chain. The mitoribosomes are attached to the mitochondrial inner membrane and translation products are cotranslationally integrated into the membrane. The polypeptide is Large ribosomal subunit protein bL34m (mrpl34) (Neurospora crassa (strain ATCC 24698 / 74-OR23-1A / CBS 708.71 / DSM 1257 / FGSC 987)).